Reading from the N-terminus, the 471-residue chain is MDHDLDKFPLLSYVLHQHDSNLHAPPSMAAQETLLPSFPLLSNPEIMSMLTQSIPTTITQTLFVFNSLGSRPDPLAVSSARFKIAQIMDSLSPEEAAKESEIYAGVVRLDEVHDSYEKKLKDTEEELSRVYSTEVESMLRSGEEVNEKVLAVLKEAESGGTVERIDLSSQELKLIPEAFWKVVGLVYLNLSGNDLTFIPDAISKLKKLEELDVSSNSLESLPDSIGMLLNLRILNVNANNLTALPESIAHCRSLVELDASYNNLTSLPTNIGYGLQNLERLSIQLNKLRYFPGSISEMYNLKYLDAHMNEIHGIPNSIGRLTKLEVLNLSSNFNNLMGVPDTITDLTNLRELDLSNNQIQAIPDSFYRLRKLEKLNLDQNPLEIPSQEVATQGAEVVREFMRKRWGDIMAEQQQRIGVEAERHGDENGWVYWGTSMVTNLVSGVTHTIGFGGATSDGGDKKPGDSYFYHQI.

Residues 106–133 (VVRLDEVHDSYEKKLKDTEEELSRVYST) are a coiled coil. 10 LRR repeats span residues 159–182 (GGTV…FWKV), 183–205 (VGLV…ISKL), 206–229 (KKLE…GMLL), 231–251 (LRIL…IAHC), 253–275 (SLVE…GYGL), 276–298 (QNLE…ISEM), 300–321 (NLKY…IGRL), 324–346 (LEVL…ITDL), 347–369 (TNLR…FYRL), and 371–392 (KLEK…VATQ). The short motif at 393–405 (GAEVVREFMRKRW) is the GVYW; degenerate element.

It belongs to the SHOC2 family. Widely expressed but preferentially in roots.

Functionally, leucine-rich repeat protein that likely mediates protein interactions, possibly in the context of signal transduction. This is Plant intracellular Ras-group-related LRR protein 2 (PIRL2) from Arabidopsis thaliana (Mouse-ear cress).